A 561-amino-acid chain; its full sequence is Putative transport protein CKO_02260 (561 aa).

5 helical membrane-spanning segments follow: residues 8 to 28 (LLNG…LCLG), 32 to 52 (LGSV…LLGQ), 66 to 86 (FMLF…SIFF), 94 to 114 (MLAL…GKLF), and 158 to 178 (NLSL…IVGA). 2 RCK C-terminal domains span residues 200–288 (RGLD…SFRN) and 292–373 (VFDR…RIGF). A run of 5 helical transmembrane segments spans residues 383 to 403 (LLAF…TFQF), 406 to 426 (FSFG…LGFL), 447 to 467 (FGLM…IGNG), 475 to 495 (MLIA…LFGA), and 540 to 560 (AIAN…WPGL).

The protein belongs to the AAE transporter (TC 2.A.81) family. YbjL subfamily.

Its subcellular location is the cell membrane. This is Putative transport protein CKO_02260 from Citrobacter koseri (strain ATCC BAA-895 / CDC 4225-83 / SGSC4696).